We begin with the raw amino-acid sequence, 545 residues long: Solute carrier family 22 member 6 (545 aa).

Residues 1-9 (MAFNDLLKQ) lie on the Cytoplasmic side of the membrane. Residues 10–30 (VGGVGRFQLIQVTMVVAPLLL) traverse the membrane as a helical segment. Residues 31-129 (MASHNTLQNF…LVCSHRAFRQ (99 aa)) are Extracellular-facing. N39, N56, N86, N91, and N107 each carry an N-linked (GlcNAc...) asparagine glycan. Residues 130 to 150 (LAQSLFMVGVLLGAMMFGYLA) form a helical membrane-spanning segment. Over 151-157 (DRLGRRK) the chain is Cytoplasmic. The chain crosses the membrane as a helical span at residues 158-177 (VLILNYLQTAVSGTCAAYAP). N178 is a glycosylation site (N-linked (GlcNAc...) asparagine). The Extracellular portion of the chain corresponds to 178–180 (NYT). The helical transmembrane segment at 181–201 (VYCIFRLLSGMSLASIAINCM) threads the bilayer. Over 202 to 218 (TLNMEWMPIHTRAYVGT) the chain is Cytoplasmic. The chain crosses the membrane as a helical span at residues 219 to 239 (LIGYVYSLGQFLLAGIAYAVP). At 240 to 242 (HWR) the chain is on the extracellular side. The chain crosses the membrane as a helical span at residues 243 to 263 (HLQLAVSVPFFVAFIYSWFFI). Residues 264-331 (ESARWYSSSG…ELLRCPTLRR (68 aa)) are Cytoplasmic-facing. The chain crosses the membrane as a helical span at residues 332 to 352 (LFLCLSMLWFATSFAYYGLVM). Topologically, residues 353-362 (DLQGFGVSMY) are extracellular. A helical membrane pass occupies residues 363–383 (LIQVIFGAVDLPAKFVCFLVI). The Cytoplasmic portion of the chain corresponds to 384 to 389 (NSMGRR). Residues 390-410 (PAQLASLLLAGICILVNGIIP) traverse the membrane as a helical segment. The Extracellular segment spans residues 411–419 (RGHTIIRTS). The helical transmembrane segment at 420 to 440 (LAVLGKGCLASSFNCIFLYTG) threads the bilayer. The Cytoplasmic portion of the chain corresponds to 441 to 450 (ELYPTMIRQT). The helical transmembrane segment at 451-471 (GLGMGSTMARVGSIVSPLISM) threads the bilayer. Over 472–478 (TAEFYPS) the chain is Extracellular. Residues 479–499 (IPLFIFGAVPVAASAVTALLP) form a helical membrane-spanning segment. The Cytoplasmic segment spans residues 500–545 (ETLGQPLPDTVQDLKSRSRGKQKQQQLEQQKQMIPLQVSTQEKNGL). The segment at 515–545 (SRSRGKQKQQQLEQQKQMIPLQVSTQEKNGL) is disordered. The segment covering 522–531 (KQQQLEQQKQ) has biased composition (low complexity). The segment covering 536–545 (QVSTQEKNGL) has biased composition (polar residues).

It belongs to the major facilitator (TC 2.A.1) superfamily. Organic cation transporter (TC 2.A.1.19) family. In terms of processing, glycosylated. Glycosylation is necessary for proper targeting of the transporter to the plasma membrane. In terms of tissue distribution, expressed in kidney. In kidney, restricted to the proximal convoluted tubule (representing S1 and S2 segments). In brain, expressed in neurons of the cortex cerebri and hippocampus as well as in the ependymal cell layer of the choroid plexus.

It localises to the basolateral cell membrane. The protein resides in the basal cell membrane. It carries out the reaction (6R)-L-erythro-5,6,7,8-tetrahydrobiopterin(out) + a dicarboxylate(in) = (6R)-L-erythro-5,6,7,8-tetrahydrobiopterin(in) + a dicarboxylate(out). The enzyme catalyses L-erythro-7,8-dihydrobiopterin(out) + a dicarboxylate(in) = L-erythro-7,8-dihydrobiopterin(in) + a dicarboxylate(out). The catalysed reaction is L-sepiapterin(out) + a dicarboxylate(in) = L-sepiapterin(in) + a dicarboxylate(out). It catalyses the reaction prostaglandin F2alpha(out) + a dicarboxylate(in) = prostaglandin F2alpha(in) + a dicarboxylate(out). It carries out the reaction prostaglandin E2(out) + a dicarboxylate(in) = prostaglandin E2(in) + a dicarboxylate(out). The enzyme catalyses 3',5'-cyclic AMP(out) + a dicarboxylate(in) = 3',5'-cyclic AMP(in) + a dicarboxylate(out). The catalysed reaction is 3',5'-cyclic GMP(out) + a dicarboxylate(in) = 3',5'-cyclic GMP(in) + a dicarboxylate(out). It catalyses the reaction urate(out) + a dicarboxylate(in) = urate(in) + a dicarboxylate(out). It carries out the reaction kynurenate(out) + glutarate(in) = kynurenate(in) + glutarate(out). The enzyme catalyses (indol-3-yl)acetate(out) + a dicarboxylate(in) = (indol-3-yl)acetate(in) + a dicarboxylate(out). The catalysed reaction is indoxyl sulfate(out) + a dicarboxylate(in) = indoxyl sulfate(in) + a dicarboxylate(out). It catalyses the reaction N-benzoylglycine(out) + a dicarboxylate(in) = N-benzoylglycine(in) + a dicarboxylate(out). It carries out the reaction 3-carboxy-4-methyl-5-propyl-2-furanpropanoate(out) + a dicarboxylate(in) = 3-carboxy-4-methyl-5-propyl-2-furanpropanoate(in) + a dicarboxylate(out). In terms of biological role, secondary active transporter that functions as a Na(+)-independent organic anion (OA)/dicarboxylate antiporter where the uptake of one molecule of OA into the cell is coupled with an efflux of one molecule of intracellular dicarboxylate such as 2-oxoglutarate or glutarate. Mediates the uptake of OA across the basolateral side of proximal tubule epithelial cells, thereby contributing to the renal elimination of endogenous OA from the systemic circulation into the urine. Functions as a biopterin transporters involved in the uptake and the secretion of coenzymes tetrahydrobiopterin (BH4), dihydrobiopterin (BH2) and sepiapterin to urine, thereby determining baseline levels of blood biopterins. Transports prostaglandin E2 (PGE2) and prostaglandin F2-alpha (PGF2-alpha) and may contribute to their renal excretion. Involved in the transport of neuroactive tryptophan metabolites kynurenate (KYNA) and xanthurenate (XA). May transport glutamate. Also involved in the disposition of uremic toxins and potentially toxic xenobiotics by the renal organic anion secretory pathway, helping reduce their undesired toxicological effects on the body. Uremic toxins include the indoxyl sulfate (IS), hippurate/N-benzoylglycine (HA), indole acetate (IA) and 3-carboxy-4- methyl-5-propyl-2-furanpropionate(CMPF) and urate. Xenobiotics include the mycotoxin ochratoxin (OTA). May also contribute to the transport of organic compounds in testes across the blood-testis-barrier. The chain is Solute carrier family 22 member 6 from Mus musculus (Mouse).